We begin with the raw amino-acid sequence, 710 residues long: Pentatricopeptide repeat-containing protein At1g02060, chloroplastic (710 aa).

The transit peptide at M1–R21 directs the protein to the chloroplast. PPR repeat units lie at residues Q137–P171, S172–T202, D208–P242, D243–V277, N280–P314, N315–P351, D352–P386, D387–L421, L429–R459, D463–P497, D498–P532, and V533–Q567.

Belongs to the PPR family. P subfamily.

Its subcellular location is the plastid. The protein localises to the chloroplast. The chain is Pentatricopeptide repeat-containing protein At1g02060, chloroplastic from Arabidopsis thaliana (Mouse-ear cress).